Reading from the N-terminus, the 429-residue chain is Histidine--tRNA ligase (429 aa).

Belongs to the class-II aminoacyl-tRNA synthetase family. As to quaternary structure, homodimer.

The protein localises to the cytoplasm. The catalysed reaction is tRNA(His) + L-histidine + ATP = L-histidyl-tRNA(His) + AMP + diphosphate + H(+). This is Histidine--tRNA ligase from Pseudomonas syringae pv. tomato (strain ATCC BAA-871 / DC3000).